The chain runs to 447 residues: Cysteine--tRNA ligase (447 aa).

Residue C28 participates in Zn(2+) binding. The 'HIGH' region motif lies at P30 to N40. Zn(2+) is bound by residues C211, H236, and E240. The short motif at K268–S272 is the 'KMSKS' region element. Position 271 (K271) interacts with ATP.

This sequence belongs to the class-I aminoacyl-tRNA synthetase family. As to quaternary structure, monomer. It depends on Zn(2+) as a cofactor.

It localises to the cytoplasm. The catalysed reaction is tRNA(Cys) + L-cysteine + ATP = L-cysteinyl-tRNA(Cys) + AMP + diphosphate. This is Cysteine--tRNA ligase from Streptococcus pneumoniae (strain ATCC BAA-255 / R6).